The following is a 37-amino-acid chain: Mu-agatoxin-Aa1d (37 aa).

4 disulfides stabilise this stretch: C2/C18, C9/C23, C17/C33, and C25/C31. Asparagine amide is present on N37.

It belongs to the neurotoxin 07 (Beta/delta-agtx) family. 03 (aga-4) subfamily. Aga sub-subfamily. In terms of tissue distribution, expressed by the venom gland.

The protein resides in the secreted. Its function is as follows. Insecticidal neurotoxin that induces an irreversible spastic paralysis when injected into insects. Modifies presynaptic voltage-gated sodium channels (Nav), causing them to open at the normal resting potential of the nerve. This leads to spontaneous release of neurotransmitter and repetitive action potentials in motor neurons. In Agelenopsis aperta (North American funnel-web spider), this protein is Mu-agatoxin-Aa1d.